The following is a 1099-amino-acid chain: Adenylate-forming reductase Nps11 (1099 aa).

The adenylation (A) domain stretch occupies residues 29 to 360; that stretch reads AEHNSNVPFF…GTECGGLNSM (332 aa). Residues His244, 347–348, Thr352, and 432–435 contribute to the AMP site; these read NV and LVGR. A Carrier domain is found at 578 to 664; it reads WSEESLVVWL…RLSQALARVV (87 aa). Ser613 bears the O-(pantetheine 4'-phosphoryl)serine mark. The tract at residues 717 to 952 is reductase (R) domain; the sequence is LTGSTGGLGS…VVSWLPPHAV (236 aa). NADP(+) contacts are provided by residues 721–724, 809–811, Tyr883, and Lys887; these read TGGL and NAW.

It belongs to the adenylate-forming reductase family.

Its function is as follows. Adenylate-forming reductase, a natural product biosynthesis enzyme that resembles non-ribosomal peptide synthetases, yet serves to modify one substrate, rather than to condense two or more building blocks. The A-domain preferentially accepts benzoic acid as substrate. The natural product of the enzyme is not yet known. The polypeptide is Adenylate-forming reductase Nps11 (Serpula lacrymans var. lacrymans (strain S7.9) (Dry rot fungus)).